The sequence spans 250 residues: Adapter protein MecA (250 aa).

This sequence belongs to the MecA family. In terms of assembly, homodimer.

Enables the recognition and targeting of unfolded and aggregated proteins to the ClpC protease or to other proteins involved in proteolysis. The protein is Adapter protein MecA of Streptococcus sanguinis (strain SK36).